The primary structure comprises 400 residues: Probable protein phosphatase 2C 64 (400 aa).

In terms of domain architecture, PPM-type phosphatase spans 47 to 355; the sequence is DFSMAVVQAN…DDITVIVVFF (309 aa). Phosphoserine is present on Ser-75. Asp-86, Gly-87, Asp-287, and Asp-346 together coordinate Mn(2+).

The protein belongs to the PP2C family. As to quaternary structure, interacts with SAUR19. The cofactor is Mg(2+). Mn(2+) is required as a cofactor.

The catalysed reaction is O-phospho-L-seryl-[protein] + H2O = L-seryl-[protein] + phosphate. The enzyme catalyses O-phospho-L-threonyl-[protein] + H2O = L-threonyl-[protein] + phosphate. Functionally, dephosphorylates and represses plasma membrane H(+)-ATPases (PM H(+)-ATPases, e.g. AHA1 and AHA2), thus influencing negatively plant growth and fitness. In Arabidopsis thaliana (Mouse-ear cress), this protein is Probable protein phosphatase 2C 64.